We begin with the raw amino-acid sequence, 172 residues long: MAPSFYHYLPVPMDEMGGKQGWGSHRQWLGAAILVVLFGVTLVILTIYFAVTANSVACRDGLRAQAECRNTTHLLQRQLTRTQDSLLQAETQANSCNLTVVTLQESLEKKVSQALEQQARIKELENEVTKLNQELENLRIQKETSSTVQVNSGSSMVVSSLLVLKVSLFLLF.

Topologically, residues 1-30 (MAPSFYHYLPVPMDEMGGKQGWGSHRQWLG) are cytoplasmic. The chain crosses the membrane as a helical; Signal-anchor for type II membrane protein span at residues 31–51 (AAILVVLFGVTLVILTIYFAV). At 52–152 (TANSVACRDG…ETSSTVQVNS (101 aa)) the chain is on the extracellular side. N-linked (GlcNAc...) asparagine glycosylation occurs at Asn-70. The stretch at 74 to 147 (LLQRQLTRTQ…LRIQKETSST (74 aa)) forms a coiled coil. Residue Asn-94 is glycosylated (N-linked (GlcNAc...) asparagine; atypical). A glycan (N-linked (GlcNAc...) asparagine) is linked at Asn-97. Residue Ser-152 is the site of GPI-anchor amidated serine attachment. A propeptide spans 153 to 172 (GSSMVVSSLLVLKVSLFLLF) (removed in mature form).

In terms of assembly, parallel homodimer; disulfide-linked. May form homotetramers under reducing conditions. Isoform 1 and isoform 2 form homodimers and also heterodimers with each other. Dimerization is essential for its antiviral activity. Interacts (via cytoplasmic domain) with ARHGAP44. Interacts with MMP14 (via C-terminal cytoplasmic tail). Interacts with LILRA4/ILT7. Interacts with RNF115. In naive mice, specifically expressed on type I interferon-producing cells (at protein level).

Its subcellular location is the golgi apparatus. The protein localises to the trans-Golgi network. It is found in the cell membrane. It localises to the late endosome. The protein resides in the membrane raft. Its subcellular location is the cytoplasm. The protein localises to the apical cell membrane. In terms of biological role, IFN-induced antiviral host restriction factor which efficiently blocks the release of diverse mammalian enveloped viruses by directly tethering nascent virions to the membranes of infected cells. Acts as a direct physical tether, holding virions to the cell membrane and linking virions to each other. The tethered virions can be internalized by endocytosis and subsequently degraded or they can remain on the cell surface. In either case, their spread as cell-free virions is restricted. Its target viruses belong to diverse families, including retroviridae: human immunodeficiency virus type 1 (HIV-1), mouse mammary tumor virus (MMTV) and murine leukemia virus (MLV), filoviridae: ebola virus (EBOV), arenaviridae: lassa virus (LASV), and rhabdoviridae: vesicular stomatitis virus (VSV). Can inhibit cell surface proteolytic activity of MMP14 causing decreased activation of MMP15 which results in inhibition of cell growth and migration. Can stimulate signaling by LILRA4/ILT7 and consequently provide negative feedback to the production of IFN by plasmacytoid dendritic cells in response to viral infection. Plays a role in the organization of the subapical actin cytoskeleton in polarized epithelial cells. This is Bone marrow stromal antigen 2 (Bst2) from Mus musculus (Mouse).